Consider the following 185-residue polypeptide: dCTP deaminase, dUMP-forming (185 aa).

DCTP is bound by residues 99-104 (KSSIAR), D117, 125-127 (TLE), Q146, Y159, K166, and Q170. E127 functions as the Proton donor/acceptor in the catalytic mechanism.

Belongs to the dCTP deaminase family. In terms of assembly, homotrimer.

It catalyses the reaction dCTP + 2 H2O = dUMP + NH4(+) + diphosphate. Its pathway is pyrimidine metabolism; dUMP biosynthesis; dUMP from dCTP: step 1/1. Functionally, bifunctional enzyme that catalyzes both the deamination of dCTP to dUTP and the hydrolysis of dUTP to dUMP without releasing the toxic dUTP intermediate. The chain is dCTP deaminase, dUMP-forming from Methanospirillum hungatei JF-1 (strain ATCC 27890 / DSM 864 / NBRC 100397 / JF-1).